Reading from the N-terminus, the 199-residue chain is MQEHQLSRVTSGNKKKYQSFDDESRDEKRMKCDSTDKLESNSNSKNIYQKTHRVIANIRERQRTQALNQSFSTLRKIIPTLPSDKLSKIQTLRLAAMYIDFLRHVIRRGEINMDSSDETFFSAQERLSYAFSVWRMEGDFYSRDKTAHYFTEQELNLCEYNFHSSFGNRLFYKAGIEAVNSADSDDITCILNTFLEGRI.

The segment at 1-43 (MQEHQLSRVTSGNKKKYQSFDDESRDEKRMKCDSTDKLESNSN) is disordered. Residues 25-39 (RDEKRMKCDSTDKLE) are compositionally biased toward basic and acidic residues. The bHLH domain maps to 51-102 (THRVIANIRERQRTQALNQSFSTLRKIIPTLPSDKLSKIQTLRLAAMYIDFL).

In terms of assembly, efficient DNA binding requires dimerization with another bHLH protein. Homodimer. Expression is seen at the point of medusa formation in the ectodermal and endodermal bud tissues, and in the entocodon which gives rise to all smooth and striated muscle cells. After the subumbrellar plate differentiates from the endoderm, strong expression is detected until the medusa detaches from the gonzoid. Expression is observed in the distal part of the medusa but diminishes in entocodon-derived muscles as the tissues differentiate, with expression disappearing completely after stage 8. In later stages expression is seen in the distal and proximal parts of the bud and depending on state of maturity, in the developing gonadal tissue.

It is found in the nucleus. In terms of biological role, probable transcription factor, which may be responsible for the formation of myoepithelial cells in early muscle development in larva and the formation of non-muscle tissues in later bud stages and mesoderm-like structures in the medusa. In Podocoryna carnea (Hydrozoan), this protein is Twist-related protein.